The chain runs to 247 residues: Type III pantothenate kinase (247 aa).

Residue 7 to 14 (AIGNSRWH) coordinates ATP. Substrate contacts are provided by residues tyrosine 91 and 95–98 (GLDR). The active-site Proton acceptor is aspartate 97. Position 117 (aspartate 117) interacts with K(+). Threonine 120 contributes to the ATP binding site. Residue threonine 172 coordinates substrate.

The protein belongs to the type III pantothenate kinase family. As to quaternary structure, homodimer. It depends on NH4(+) as a cofactor. Requires K(+) as cofactor.

The protein localises to the cytoplasm. The catalysed reaction is (R)-pantothenate + ATP = (R)-4'-phosphopantothenate + ADP + H(+). The protein operates within cofactor biosynthesis; coenzyme A biosynthesis; CoA from (R)-pantothenate: step 1/5. In terms of biological role, catalyzes the phosphorylation of pantothenate (Pan), the first step in CoA biosynthesis. The chain is Type III pantothenate kinase from Synechococcus elongatus (strain ATCC 33912 / PCC 7942 / FACHB-805) (Anacystis nidulans R2).